Here is a 259-residue protein sequence, read N- to C-terminus: UPF0739 protein C1orf74 homolog (259 aa).

It belongs to the UPF0739 family.

The sequence is that of UPF0739 protein C1orf74 homolog from Danio rerio (Zebrafish).